Reading from the N-terminus, the 97-residue chain is MAIGFICSSPDAELFSEKSRMSSSVLLGCLLCCMDWSAAVPGKTEPFRKLFDAIMIKKLKSCSAAYPSDLDEGSMCDMADASPTSLELGLSKLDKES.

2 cysteine pairs are disulfide-bonded: C32–C62 and C33–C76.

This sequence belongs to the intercrine beta (chemokine CC) family. Highly divergent.

The polypeptide is Putative CC-type chemokine U83 (U83) (Human herpesvirus 6A (strain Uganda-1102) (HHV-6 variant A)).